The following is a 207-amino-acid chain: Guanylate kinase (207 aa).

The region spanning G4–I184 is the Guanylate kinase-like domain. A11–S18 contributes to the ATP binding site.

It belongs to the guanylate kinase family.

It localises to the cytoplasm. The enzyme catalyses GMP + ATP = GDP + ADP. Essential for recycling GMP and indirectly, cGMP. This chain is Guanylate kinase, found in Buchnera aphidicola subsp. Schizaphis graminum (strain Sg).